The following is a 165-amino-acid chain: UPF0114 protein in repA1-repA2 intergenic region (165 aa).

Transmembrane regions (helical) follow at residues 10-32, 53-75, and 136-155; these read YASR…LLTL, LILI…MVMF, and IMWC…GMAC.

The protein belongs to the UPF0114 family.

The protein resides in the cell membrane. The chain is UPF0114 protein in repA1-repA2 intergenic region from Buchnera aphidicola subsp. Geoica urticularia.